The sequence spans 149 residues: D-aminoacyl-tRNA deacylase (149 aa).

The short motif at 138–139 (GP) is the Gly-cisPro motif, important for rejection of L-amino acids element.

It belongs to the DTD family. As to quaternary structure, homodimer.

Its subcellular location is the cytoplasm. It catalyses the reaction glycyl-tRNA(Ala) + H2O = tRNA(Ala) + glycine + H(+). It carries out the reaction a D-aminoacyl-tRNA + H2O = a tRNA + a D-alpha-amino acid + H(+). Its function is as follows. An aminoacyl-tRNA editing enzyme that deacylates mischarged D-aminoacyl-tRNAs. Also deacylates mischarged glycyl-tRNA(Ala), protecting cells against glycine mischarging by AlaRS. Acts via tRNA-based rather than protein-based catalysis; rejects L-amino acids rather than detecting D-amino acids in the active site. By recycling D-aminoacyl-tRNA to D-amino acids and free tRNA molecules, this enzyme counteracts the toxicity associated with the formation of D-aminoacyl-tRNA entities in vivo and helps enforce protein L-homochirality. In Chlorobaculum parvum (strain DSM 263 / NCIMB 8327) (Chlorobium vibrioforme subsp. thiosulfatophilum), this protein is D-aminoacyl-tRNA deacylase.